Here is a 1347-residue protein sequence, read N- to C-terminus: MENLPFPLKLLSASSLNAPSSTPWVLDIFLTLVFALGFFFLLLPYLSYFRCDDPPSPSPGKRKCPVGRRRRPRGRMKNHSLRAGRECPRGLEETSDLLSQLQSLLGPHLDKGDFGQLSGPDPPGEVGERAPDGASQSSHEPMEDAAPILSPLASPDPQAKHPQDLASTPSPGPMTTSVSSLSASQPPEPSLPLEHPSPEPPALFPHPPHTPDPLACSLPPPKGFTAPPLRDSTLITPSHCDSVAFPLGTVPQSLSPHEDLVASVPAISGLGGSNSHVSASSRWQETARTSCAFNSSVQQDHLSRHPPETCQMEAGSLFLLSSDGQNVVGIQVTETAKVNIWEEKENVGSFTNRMTPEKHLNYLRNLAKSLDAEQDTTNPKPFWNMGENSKQLPGPQKLSDPRLWQESFWKNYSQLFWGLPSLHSESLVANAWVTDRSYTLQSPPFLFNEMSNVCPIQRETTMSPLLFQAQPLSHLGPECQPFISSTPQFRPTPMAQAEAQAHLQSSFPVLSPAFPSLIQNTGVACPASQNKVQALSLPETQHPEWPLLRRQLEGRLALPSRVQKSQDVFSVSTPNLPQESLTSILPENFPVSPELRRQLEQHIKKWIIQHWGNLGRIQESLDLMQLRDESPGTSQAKGKPSPWQSSMSTGESSKEAQKVKFQLERDPCPHLGQILGETPQNLSRDMKSFPRKVLGVTSEELERNLRKPLRSDSGSDLLRCTERTHIENILKAHMGRNLGQTNEGLIPVCVRRSWLAVNQALPVSNTHVKTSNLAAPKSGKACVNTAQVLSFLEPCTQQGLGAHIVRFWAKHRWGLPLRVLKPIQCFKLEKVSSLSLTQLAGPSSATCESGAGSEVEVDMFLRKPPMASLRKQVLTKASDHMPESLLASSPAWKQFQRAPRGIPSWNDHEPLKPPPAGQEGRWPSKPLTYSLTGSIQQSRSLGAQSSKAGETREAVPQCRVPLETCMLANLQATSEDVHGFEAPGTSKSSLHPRVSVSQDPRKLCLMEEVVNEFEPGMATKSETQPQVCAAVVLLPDGQASVVPHASENLVSQVPQGHLQSMPTGNMRASQELHDLMAARRSKLVHEEPRNPNCQGSCKSQRPMFPPIHKSEKSRKPNLEKHEERLEGLRTPQLTPVRKTEDTHQDEGVQLLPSKKQPPSVSPFGENIKQIFQWIFSKKKSKPAPVTAESQKTVKNRSRVYSSSAEAQGLMTAVGQMLDEKMSLCHARHASKVNQHKQKFQAPVCGFPCNHRHLFYSEHGRILSYAASSQQATLKSQGCPNRDRQIRNQQPLKSVRCNNEQWGLRHPQILHPKKAVSPVSPPQHWPKTSGASSHHHHCPRHCLLWEGI.

The chain crosses the membrane as a helical span at residues 23–43 (PWVLDIFLTLVFALGFFFLLL). Disordered stretches follow at residues 55–88 (PSPSPGKRKCPVGRRRRPRGRMKNHSLRAGRECP), 106–233 (GPHL…RDST), 374–397 (QDTTNPKPFWNMGENSKQLPGPQK), 628–658 (DESPGTSQAKGKPSPWQSSMSTGESSKEAQK), 900–955 (RGIP…REAV), 1084–1161 (VHEE…PSVS), and 1313–1335 (KAVSPVSPPQHWPKTSGASSHHH). The segment covering 60-82 (GKRKCPVGRRRRPRGRMKNHSLR) has biased composition (basic residues). Residues 165 to 178 (LASTPSPGPMTTSV) are compositionally biased toward polar residues. A compositionally biased stretch (pro residues) spans 198-211 (PEPPALFPHPPHTP). Polar residues-rich tracts occupy residues 631–651 (PGTSQAKGKPSPWQSSMSTGE) and 927–948 (LTYSLTGSIQQSRSLGAQSSKA). 2 stretches are compositionally biased toward basic and acidic residues: residues 1108 to 1127 (HKSEKSRKPNLEKHEERLEG) and 1137 to 1146 (RKTEDTHQDE).

The protein belongs to the SPATA31 family.

It is found in the membrane. In terms of biological role, may play a role in spermatogenesis. The chain is Spermatogenesis-associated protein 31A7 from Homo sapiens (Human).